The primary structure comprises 159 residues: Testis-specific XK-related protein, Y-linked (159 aa).

The next 3 membrane-spanning stretches (helical) occupy residues 1-21 (MFIF…VGAI), 45-65 (IYLM…LAFF), and 72-92 (GSLH…WLEF).

The protein belongs to the XK family. In terms of tissue distribution, testis specific.

It is found in the membrane. The chain is Testis-specific XK-related protein, Y-linked (XKRY) from Homo sapiens (Human).